Consider the following 331-residue polypeptide: Probable allantoicase (331 aa).

The protein belongs to the allantoicase family.

The enzyme catalyses allantoate + H2O = (S)-ureidoglycolate + urea. It functions in the pathway nitrogen metabolism; (S)-allantoin degradation; (S)-ureidoglycolate from allantoate (aminidohydrolase route): step 1/1. The sequence is that of Probable allantoicase from Stutzerimonas stutzeri (strain A1501) (Pseudomonas stutzeri).